The primary structure comprises 449 residues: MKITVHSSKAVKPVYGDAVAAPSTADVVPLSVFDRANFDTYVSVIYAFRPPAPANSVLEAGLAKALAEYREWAGRLGVDGDGDRAILLNDAGARFVEATADVTLDSVVPLEPTPRVTSLHPSADDDGAEAEVMMVQVTRFACGSLAVGFTAHHMVSDGRATSNFFLAWSQATRGVAIHPVPVHDRASFFTPRDPPRVDYEHRGVEFKTCEKLDRNENNDDGHGHGHDGEVVVTHKVHFSREFISKLKALASAGGGQRSYSTLQCVVAHLWRCITMARGLEGSVATSVSIAVDGRARMSPPVLDGYTGNVVLWARPTATARELVTMPLQHAMGLINRAVARINDGYFKSFVDFANSGAVEEERLVASADAAEMVLSPNIEVDSWLRIPFYELDFGSGQPFLFTPSYLPVEGLLILLPSFSGDGSVDAYVPLFSHDMDTFKNCCYVLPELS.

Active-site proton acceptor residues include H153 and D392.

It belongs to the plant acyltransferase family. In terms of tissue distribution, highly expressed in roots. Expressed at low levels in flowers.

In terms of biological role, hydroxycinnamoyl transferase that catalyzes the transfer of an acyl from p-coumaryol-CoA to agmatine, to produce coumaroyl agmatine. Can use feruloyl-CoA, caffeoyl-CoA and sinapoyl-CoA as acyl donors. Seems to be able to transfer the acyl group from p-coumaroyl-CoA and feruloyl-CoA to the acyl acceptors putrescine and spermidine. This Oryza sativa subsp. japonica (Rice) protein is Agmatine hydroxycinnamoyltransferase 1.